A 203-amino-acid polypeptide reads, in one-letter code: Large ribosomal subunit protein uL13 (203 aa).

The residue at position 2 (Ala2) is an N-acetylalanine. Arg59 carries the post-translational modification Citrulline. Ser77 bears the Phosphoserine mark. Arg140 is subject to Citrulline. Lys191 carries the N6-acetyllysine modification.

Belongs to the universal ribosomal protein uL13 family. Component of the 60S ribosome. Component of the GAIT complex. Interacts with EIF4G1. Phosphorylation at Ser-77 upon interferon-gamma treatment in monocytes involves a DAPK1-DAPK3 kinase cascade and is causing release from the ribosome, association with the GAIT complex and subsequent involvement in transcript-selective translation inhibition. Post-translationally, citrullinated by PADI4.

It localises to the cytoplasm. Its function is as follows. Associated with ribosomes but is not required for canonical ribosome function and has extra-ribosomal functions. Component of the GAIT (gamma interferon-activated inhibitor of translation) complex which mediates interferon-gamma-induced transcript-selective translation inhibition in inflammation processes. Upon interferon-gamma activation and subsequent phosphorylation dissociates from the ribosome and assembles into the GAIT complex which binds to stem loop-containing GAIT elements in the 3'-UTR of diverse inflammatory mRNAs (such as ceruplasmin) and suppresses their translation. In the GAIT complex interacts with m7G cap-bound eIF4G at or near the eIF3-binding site and blocks the recruitment of the 43S ribosomal complex. Involved in methylation of rRNA. This Oryctolagus cuniculus (Rabbit) protein is Large ribosomal subunit protein uL13 (RPL13A).